Reading from the N-terminus, the 136-residue chain is Small ribosomal subunit protein uS12 (136 aa).

Asp-89 is subject to 3-methylthioaspartic acid. Residues 101–136 (SLDTSGVADRKQSRSKYGAKQPKAGVPAPVKGKGKR) are disordered.

Belongs to the universal ribosomal protein uS12 family. In terms of assembly, part of the 30S ribosomal subunit. Contacts proteins S8 and S17. May interact with IF1 in the 30S initiation complex.

Functionally, with S4 and S5 plays an important role in translational accuracy. In terms of biological role, interacts with and stabilizes bases of the 16S rRNA that are involved in tRNA selection in the A site and with the mRNA backbone. Located at the interface of the 30S and 50S subunits, it traverses the body of the 30S subunit contacting proteins on the other side and probably holding the rRNA structure together. The combined cluster of proteins S8, S12 and S17 appears to hold together the shoulder and platform of the 30S subunit. The polypeptide is Small ribosomal subunit protein uS12 (Pelodictyon phaeoclathratiforme (strain DSM 5477 / BU-1)).